A 140-amino-acid polypeptide reads, in one-letter code: Calcium-binding protein B (140 aa).

2 consecutive EF-hand domains span residues 38–73 (ATLSKYKTQFMSYDINNSGDIDHYELQLLMEKINQP) and 74–109 (KTYLELKKMIEQVDSTGKGAINFRDFIKMMTGKTSS). Ca(2+) is bound by residues Asp-51, Asn-53, Ser-55, Asp-57, and Glu-62.

This is Calcium-binding protein B (cbpB) from Dictyostelium discoideum (Social amoeba).